We begin with the raw amino-acid sequence, 436 residues long: MRQALPLVTRQGDRIAIVSGLRTPFARQATAFHGIPAVDLGKMVVGELLARSEIPADAIEQLVFGQVVQMPKAPNIAREIVLGTGMNVHTDAYSVSRACATSFQAVANVAESLMAGTIRAGIAGGADSSSVLPIGVSKALARVLVDVNKARTTRQRLTLFSRLRLRDLLPVPPAVAEYSTGLRMGDTAEQMAKTYGITREQQDALAHRSHQRAAQAWAEGKLAEEVMTTYVPPYKNPFAEDNNIRGASTLADYAKLRPAFDRKHGSVTAANSTPLTDGAAAVILMTESRAKELGLHPLGYLRSYAFTAIDVWQDMLLGPAWSTPLALERAGLTMADLTLFDMHEAFAAQTLANLQLLGSERFAREVLGRAQATGEVDDAKFNVLGGSIAYGHPFAATGARMITQTLHELRRRGGGFGLVTACAAGGLGAAMVLEAE.

C99 functions as the Acyl-thioester intermediate in the catalytic mechanism. Active-site proton acceptor residues include H392 and C422.

Belongs to the thiolase-like superfamily. Thiolase family. Heterotetramer of two alpha chains (FadJ) and two beta chains (FadI).

The protein localises to the cytoplasm. It catalyses the reaction an acyl-CoA + acetyl-CoA = a 3-oxoacyl-CoA + CoA. The protein operates within lipid metabolism; fatty acid beta-oxidation. In terms of biological role, catalyzes the final step of fatty acid oxidation in which acetyl-CoA is released and the CoA ester of a fatty acid two carbons shorter is formed. The sequence is that of 3-ketoacyl-CoA thiolase from Salmonella paratyphi A (strain AKU_12601).